The following is a 277-amino-acid chain: Energy-coupling factor transporter ATP-binding protein EcfA1 (277 aa).

The region spanning 4–238 is the ABC transporter domain; that stretch reads IETQDLCHTY…PDLLSSVRLD (235 aa). Position 37-44 (37-44) interacts with ATP; sequence GPNGAGKS.

This sequence belongs to the ABC transporter superfamily. Energy-coupling factor EcfA family. In terms of assembly, forms a stable energy-coupling factor (ECF) transporter complex composed of 2 membrane-embedded substrate-binding proteins (S component), 2 ATP-binding proteins (A component) and 2 transmembrane proteins (T component).

The protein localises to the cell membrane. Functionally, ATP-binding (A) component of a common energy-coupling factor (ECF) ABC-transporter complex. Unlike classic ABC transporters this ECF transporter provides the energy necessary to transport a number of different substrates. This chain is Energy-coupling factor transporter ATP-binding protein EcfA1, found in Methanospirillum hungatei JF-1 (strain ATCC 27890 / DSM 864 / NBRC 100397 / JF-1).